Here is a 365-residue protein sequence, read N- to C-terminus: Cobalt-precorrin-5B C(1)-methyltransferase (365 aa).

It belongs to the CbiD family.

The enzyme catalyses Co-precorrin-5B + S-adenosyl-L-methionine = Co-precorrin-6A + S-adenosyl-L-homocysteine. Its pathway is cofactor biosynthesis; adenosylcobalamin biosynthesis; cob(II)yrinate a,c-diamide from sirohydrochlorin (anaerobic route): step 6/10. Its function is as follows. Catalyzes the methylation of C-1 in cobalt-precorrin-5B to form cobalt-precorrin-6A. The sequence is that of Cobalt-precorrin-5B C(1)-methyltransferase from Pseudomonas fluorescens (strain Pf0-1).